The primary structure comprises 404 residues: Protein IQ-DOMAIN 12 (404 aa).

A calmodulin-binding region spans residues 8–25 (FGWMKRLFICEAKARAEK). Positions 11 to 18 (MKRLFICE) match the Nuclear localization signal 1 motif. 2 consecutive IQ domains span residues 108–135 (NVAA…ALVR) and 136–158 (LQAI…SSHS). The Nuclear localization signal 2 signature appears at 226 to 233 (IKRDRMLK).

It belongs to the IQD family. As to quaternary structure, binds to multiple calmodulin (CaM) in the presence of Ca(2+) and CaM-like proteins.

The protein resides in the nucleus. It localises to the cell membrane. In terms of biological role, may be involved in cooperative interactions with calmodulins or calmodulin-like proteins. Recruits calmodulin proteins to microtubules, thus being a potential scaffold in cellular signaling and trafficking. May associate with nucleic acids and regulate gene expression at the transcriptional or post-transcriptional level. The chain is Protein IQ-DOMAIN 12 from Arabidopsis thaliana (Mouse-ear cress).